Reading from the N-terminus, the 426-residue chain is MLDIQLLRTQLDTVAARLAARGYTLDTEAFTALENERKALQTRTQDLQARRNSLSKQVGEAKRRGEDASAVLAEVSGLGDELKANEAALEGLQGRLAELLQAIPNLPHESVPVGRDETGNVEIRRVGVPRSFDFQVKDHVDIGTPLGLDAETGAKLSGARFTVLRGQMARLHRALAQFMLNTHADEHGYTEVYTPYMVNATSMYGTGQLPKFEEDLFRVPRGDENFYLVPTAEVPVTNFVRDEIVKAADLPLRYVAHTPCFRSEAGAYGRDTRGMIRQHQFDKVELVQVVRPEESLNALETLTGHAETILKKLGLPYRVIVLCTGDMGFGSQKTYDIEVWLPAQDTYREISSCSSMGDFQARRMQARFKDEAGKNQLVHTLNGSGLAVGRTLVAVLENYQNADGSVTVPEVLRPYMGGLEKLLPQG.

231–233 (TAE) serves as a coordination point for L-serine. 262 to 264 (RSE) contacts ATP. L-serine is bound at residue Glu-285. 349-352 (EISS) is a binding site for ATP. Ser-384 contacts L-serine.

The protein belongs to the class-II aminoacyl-tRNA synthetase family. Type-1 seryl-tRNA synthetase subfamily. In terms of assembly, homodimer. The tRNA molecule binds across the dimer.

Its subcellular location is the cytoplasm. The catalysed reaction is tRNA(Ser) + L-serine + ATP = L-seryl-tRNA(Ser) + AMP + diphosphate + H(+). It catalyses the reaction tRNA(Sec) + L-serine + ATP = L-seryl-tRNA(Sec) + AMP + diphosphate + H(+). Its pathway is aminoacyl-tRNA biosynthesis; selenocysteinyl-tRNA(Sec) biosynthesis; L-seryl-tRNA(Sec) from L-serine and tRNA(Sec): step 1/1. Functionally, catalyzes the attachment of serine to tRNA(Ser). Is also able to aminoacylate tRNA(Sec) with serine, to form the misacylated tRNA L-seryl-tRNA(Sec), which will be further converted into selenocysteinyl-tRNA(Sec). The sequence is that of Serine--tRNA ligase from Laribacter hongkongensis (strain HLHK9).